Consider the following 339-residue polypeptide: Large ribosomal subunit protein uL11m (339 aa).

Belongs to the universal ribosomal protein uL11 family.

It localises to the mitochondrion. The chain is Large ribosomal subunit protein uL11m (RPL11) from Acanthamoeba castellanii (Amoeba).